The sequence spans 418 residues: Protein FAM53A (418 aa).

2 disordered regions span residues 198-236 (TSPV…FNPR) and 248-269 (ETGN…LSRR). Low complexity predominate over residues 205–229 (SSASSGFVDSSEGSTSSSTRWNSGG). A compositionally biased stretch (polar residues) spans 248–265 (ETGNLLPSANSTPTSTPE). The Nuclear localization signal signature appears at 285–293 (KKSRLKRRR).

Belongs to the FAM53 family.

Its subcellular location is the nucleus. In terms of biological role, may play an important role in neural development; the dorsomedial roof of the third ventricle. The chain is Protein FAM53A from Gallus gallus (Chicken).